A 333-amino-acid chain; its full sequence is tRNA-modifying protein YgfZ (333 aa).

Residues W33 and W195 each contribute to the folate site.

This sequence belongs to the tRNA-modifying YgfZ family.

The protein localises to the cytoplasm. In terms of biological role, folate-binding protein involved in regulating the level of ATP-DnaA and in the modification of some tRNAs. It is probably a key factor in regulatory networks that act via tRNA modification, such as initiation of chromosomal replication. In Pectobacterium atrosepticum (strain SCRI 1043 / ATCC BAA-672) (Erwinia carotovora subsp. atroseptica), this protein is tRNA-modifying protein YgfZ.